Consider the following 177-residue polypeptide: Ribosome rescue factor SmrB (177 aa).

The disordered stretch occupies residues 22–45 (SKKLRQDTIIHQPSKNFSEQQKQR). Polar residues predominate over residues 30 to 41 (IIHQPSKNFSEQ). The Smr domain maps to 98 to 173 (LDMHGMKQDE…GAGAILVLLS (76 aa)).

It belongs to the SmrB family. In terms of assembly, associates with collided ribosomes, but not with correctly translating polysomes.

Functionally, acts as a ribosome collision sensor. Detects stalled/collided disomes (pairs of ribosomes where the leading ribosome is stalled and a second ribosome has collided with it) and endonucleolytically cleaves mRNA at the 5' boundary of the stalled ribosome. Stalled/collided disomes form a new interface (primarily via the 30S subunits) that binds SmrB. Cleaved mRNA becomes available for tmRNA ligation, leading to ribosomal subunit dissociation and rescue of stalled ribosomes. The sequence is that of Ribosome rescue factor SmrB from Aliivibrio salmonicida (strain LFI1238) (Vibrio salmonicida (strain LFI1238)).